The chain runs to 751 residues: Myb-related protein A (751 aa).

Positions 1-22 (MAKRSRSEDEDDDLQYADHDYE) are disordered. 3 consecutive HTH myb-type domains span residues 30-81 (KKLW…QKVL), 82-137 (NPEL…NPEV), and 138-188 (KKSS…RRKV). 3 DNA-binding regions (H-T-H motif) span residues 58–81 (WTLI…QKVL), 110–133 (WSLI…HNHL), and 161–184 (WAEI…NSTM). A Glycyl lysine isopeptide (Lys-Gly) (interchain with G-Cter in SUMO2) cross-link involves residue K199. A transcriptional activation domain region spans residues 230-294 (IPGYQYVSPD…RLPPQPGSFS (65 aa)). A negative regulatory domain region spans residues 297–552 (SGSFLMDDSM…IRRSILGTTP (256 aa)). At K393 the chain carries N6-acetyllysine. Residues K591 and K601 each participate in a glycyl lysine isopeptide (Lys-Gly) (interchain with G-Cter in SUMO2) cross-link.

As to quaternary structure, component of the DREAM complex (also named LINC complex) at least composed of E2F4, E2F5, LIN9, LIN37, LIN52, LIN54, MYBL1, MYBL2, RBL1, RBL2, RBBP4, TFDP1 and TFDP2. The complex exists in quiescent cells where it represses cell cycle-dependent genes. It dissociates in S phase when LIN9, LIN37, LIN52 and LIN54 form a subcomplex that binds to MYBL2. In terms of tissue distribution, predominantly in the testis. Very low levels in the ovaries, spleen and brain.

Its subcellular location is the nucleus. Functionally, transcription factor that specifically recognizes the sequence 5'-YAAC[GT]G-3'. Acts as a master regulator of male meiosis by promoting expression of piRNAs: activates expression of both piRNA precursor RNAs and expression of protein-coding genes involved in piRNA metabolism, such as PIWIL1. The piRNA metabolic process mediates the repression of transposable elements during meiosis by forming complexes composed of piRNAs and Piwi proteins and governs the methylation and subsequent repression of transposons, which is essential for the germline integrity. Transcriptional activator of SOX30. The chain is Myb-related protein A (Mybl1) from Mus musculus (Mouse).